A 425-amino-acid polypeptide reads, in one-letter code: D-amino acid dehydrogenase (425 aa).

3–17 (VLVMGAGVIGVTTAY) is an FAD binding site.

It belongs to the DadA oxidoreductase family. The cofactor is FAD.

The enzyme catalyses a D-alpha-amino acid + A + H2O = a 2-oxocarboxylate + AH2 + NH4(+). It functions in the pathway amino-acid degradation; D-alanine degradation; NH(3) and pyruvate from D-alanine: step 1/1. Functionally, oxidative deamination of D-amino acids. The sequence is that of D-amino acid dehydrogenase from Rhodopseudomonas palustris (strain HaA2).